Consider the following 123-residue polypeptide: Holo-[acyl-carrier-protein] synthase (123 aa).

Residues Asp-8 and Glu-60 each coordinate Mg(2+).

Belongs to the P-Pant transferase superfamily. AcpS family. Requires Mg(2+) as cofactor.

It localises to the cytoplasm. The catalysed reaction is apo-[ACP] + CoA = holo-[ACP] + adenosine 3',5'-bisphosphate + H(+). Transfers the 4'-phosphopantetheine moiety from coenzyme A to a Ser of acyl-carrier-protein. In Wolbachia pipientis wMel, this protein is Holo-[acyl-carrier-protein] synthase.